The primary structure comprises 202 residues: Protein lin-28 homolog A (202 aa).

Positions Met1 to Pro31 are disordered. Positions His33–Pro106 constitute a CSD domain. A flexible linker region spans residues Gly107 to Gly130. 2 CCHC-type zinc fingers span residues Asp131–Leu148 and Lys153–Ala170. Residues Cys133, Cys136, His141, Cys146, Cys155, Cys158, His163, and Cys168 each contribute to the Zn(2+) site. A disordered region spans residues Pro169 to Glu202.

This sequence belongs to the lin-28 family. As to quaternary structure, monomer.

It localises to the cytoplasm. The protein localises to the rough endoplasmic reticulum. Its subcellular location is the P-body. It is found in the stress granule. The protein resides in the nucleus. It localises to the nucleolus. Functionally, RNA-binding protein that inhibits processing of pre-let-7 miRNAs and regulates translation of mRNAs that control developmental timing, pluripotency and metabolism. Seems to recognize a common structural G-quartet (G4) feature in its miRNA and mRNA targets. 'Translational enhancer' that drives specific mRNAs to polysomes and increases the efficiency of protein synthesis. Its association with the translational machinery and target mRNAs results in an increased number of initiation events per molecule of mRNA and, indirectly, in mRNA stabilization. Suppressor of microRNA (miRNA) biogenesis, including that of let-7. Binds specific target miRNA precursors (pre-miRNAs), recognizing an 5'-GGAG-3' motif found in their terminal loop, and recruits uridylyltransferase. This results in the terminal uridylation of target pre-miRNAs. Uridylated pre-miRNAs fail to be processed by Dicer and undergo degradation. Localized to the periendoplasmic reticulum area, binds to a large number of spliced mRNAs and inhibits the translation of mRNAs destined for the ER, reducing the synthesis of transmembrane proteins, ER or Golgi lumen proteins, and secretory proteins. Binds to and enhances the translation of mRNAs for several metabolic enzymes, increasing glycolysis and oxidative phosphorylation. Which, with the let-7 repression may enhance tissue repair in adult tissue. The sequence is that of Protein lin-28 homolog A (LIN28A) from Gallus gallus (Chicken).